We begin with the raw amino-acid sequence, 29 residues long: Cytochrome b6-f complex subunit 8 (29 aa).

Residues 3 to 23 (IITFGWVAVAAFFALSIAFVV) form a helical membrane-spanning segment.

Belongs to the PetN family. As to quaternary structure, the 4 large subunits of the cytochrome b6-f complex are cytochrome b6, subunit IV (17 kDa polypeptide, PetD), cytochrome f and the Rieske protein, while the 4 small subunits are PetG, PetL, PetM and PetN. The complex functions as a dimer.

The protein resides in the cellular thylakoid membrane. Component of the cytochrome b6-f complex, which mediates electron transfer between photosystem II (PSII) and photosystem I (PSI), cyclic electron flow around PSI, and state transitions. The polypeptide is Cytochrome b6-f complex subunit 8 (Synechococcus sp. (strain JA-3-3Ab) (Cyanobacteria bacterium Yellowstone A-Prime)).